The sequence spans 138 residues: Putative nickel-responsive regulator (138 aa).

Residues His-78, His-89, His-91, and Cys-97 each contribute to the Ni(2+) site.

The protein belongs to the transcriptional regulatory CopG/NikR family. Ni(2+) serves as cofactor.

Transcriptional regulator. This chain is Putative nickel-responsive regulator, found in Thermococcus kodakarensis (strain ATCC BAA-918 / JCM 12380 / KOD1) (Pyrococcus kodakaraensis (strain KOD1)).